The chain runs to 469 residues: 3-isopropylmalate dehydratase large subunit (469 aa).

Positions 347, 408, and 411 each coordinate [4Fe-4S] cluster.

Belongs to the aconitase/IPM isomerase family. LeuC type 1 subfamily. As to quaternary structure, heterodimer of LeuC and LeuD. It depends on [4Fe-4S] cluster as a cofactor.

The enzyme catalyses (2R,3S)-3-isopropylmalate = (2S)-2-isopropylmalate. Its pathway is amino-acid biosynthesis; L-leucine biosynthesis; L-leucine from 3-methyl-2-oxobutanoate: step 2/4. Functionally, catalyzes the isomerization between 2-isopropylmalate and 3-isopropylmalate, via the formation of 2-isopropylmaleate. This Actinobacillus pleuropneumoniae serotype 3 (strain JL03) protein is 3-isopropylmalate dehydratase large subunit.